The sequence spans 333 residues: Lipoyl synthase (333 aa).

Polar residues predominate over residues 1-15 (MSTLVESPVPSNDSQ). The interval 1–34 (MSTLVESPVPSNDSQAAAPAAYDPTQKQKSQAKT) is disordered. Cys-80, Cys-85, Cys-91, Cys-106, Cys-110, Cys-113, and Ser-320 together coordinate [4Fe-4S] cluster. The Radical SAM core domain occupies 91-309 (CFGKGTATFM…EREAYAMGFT (219 aa)).

It belongs to the radical SAM superfamily. Lipoyl synthase family. Requires [4Fe-4S] cluster as cofactor.

It localises to the cytoplasm. It carries out the reaction [[Fe-S] cluster scaffold protein carrying a second [4Fe-4S](2+) cluster] + N(6)-octanoyl-L-lysyl-[protein] + 2 oxidized [2Fe-2S]-[ferredoxin] + 2 S-adenosyl-L-methionine + 4 H(+) = [[Fe-S] cluster scaffold protein] + N(6)-[(R)-dihydrolipoyl]-L-lysyl-[protein] + 4 Fe(3+) + 2 hydrogen sulfide + 2 5'-deoxyadenosine + 2 L-methionine + 2 reduced [2Fe-2S]-[ferredoxin]. It participates in protein modification; protein lipoylation via endogenous pathway; protein N(6)-(lipoyl)lysine from octanoyl-[acyl-carrier-protein]: step 2/2. Functionally, catalyzes the radical-mediated insertion of two sulfur atoms into the C-6 and C-8 positions of the octanoyl moiety bound to the lipoyl domains of lipoate-dependent enzymes, thereby converting the octanoylated domains into lipoylated derivatives. This is Lipoyl synthase from Bordetella bronchiseptica (strain ATCC BAA-588 / NCTC 13252 / RB50) (Alcaligenes bronchisepticus).